The chain runs to 307 residues: Dihydroorotate dehydrogenase B (NAD(+)), catalytic subunit (307 aa).

FMN contacts are provided by residues serine 22 and 46–47 (KA). Substrate is bound by residues lysine 46 and 70–74 (NAIGL). FMN is bound by residues asparagine 102 and asparagine 130. Position 130 (asparagine 130) interacts with substrate. Catalysis depends on cysteine 133, which acts as the Nucleophile. Residues lysine 168 and isoleucine 194 each contribute to the FMN site. 195 to 196 (NT) provides a ligand contact to substrate. FMN-binding positions include glycine 220, 246–247 (GG), and 268–269 (GT).

This sequence belongs to the dihydroorotate dehydrogenase family. Type 1 subfamily. In terms of assembly, heterotetramer of 2 PyrK and 2 PyrD type B subunits. FMN is required as a cofactor.

Its subcellular location is the cytoplasm. It catalyses the reaction (S)-dihydroorotate + NAD(+) = orotate + NADH + H(+). The protein operates within pyrimidine metabolism; UMP biosynthesis via de novo pathway; orotate from (S)-dihydroorotate (NAD(+) route): step 1/1. Its function is as follows. Catalyzes the conversion of dihydroorotate to orotate with NAD(+) as electron acceptor. This chain is Dihydroorotate dehydrogenase B (NAD(+)), catalytic subunit (pyrD), found in Latilactobacillus sakei subsp. sakei (strain 23K) (Lactobacillus sakei subsp. sakei).